Reading from the N-terminus, the 523-residue chain is 2-hydroxyisoflavanone synthase (523 aa).

Residues 2-22 (LVELAITLLVIALFIHLRPTL) form a helical membrane-spanning segment. C450 is a heme binding site.

This sequence belongs to the cytochrome P450 family. It depends on heme as a cofactor.

The protein resides in the microsome membrane. The enzyme catalyses (2S)-liquiritigenin + reduced [NADPH--hemoprotein reductase] + O2 = (2R,3S)-2,4',7-trihydroxyisoflavanone + oxidized [NADPH--hemoprotein reductase] + H2O + H(+). The catalysed reaction is (2S)-naringenin + reduced [NADPH--hemoprotein reductase] + O2 = 2-hydroxy-2,3-dihydrogenistein + oxidized [NADPH--hemoprotein reductase] + H2O + H(+). 2-hydroxyisoflavanone synthase, which catalyzes the hydroxylation associated with 1,2-aryl migration of flavanones. Converts liquiritigenin and naringenin into highly unstable precursors of the isoflavones daidzein and genistein. Acts only on substrates with (2S)-chirality. The sequence is that of 2-hydroxyisoflavanone synthase (CYP93C2) from Glycyrrhiza echinata (Licorice).